Here is a 432-residue protein sequence, read N- to C-terminus: Glutamate-1-semialdehyde 2,1-aminomutase 2 (432 aa).

Lysine 268 is modified (N6-(pyridoxal phosphate)lysine).

This sequence belongs to the class-III pyridoxal-phosphate-dependent aminotransferase family. HemL subfamily. Homodimer. Requires pyridoxal 5'-phosphate as cofactor.

The protein localises to the cytoplasm. It carries out the reaction (S)-4-amino-5-oxopentanoate = 5-aminolevulinate. It functions in the pathway porphyrin-containing compound metabolism; protoporphyrin-IX biosynthesis; 5-aminolevulinate from L-glutamyl-tRNA(Glu): step 2/2. This is Glutamate-1-semialdehyde 2,1-aminomutase 2 from Listeria monocytogenes serotype 4b (strain F2365).